Reading from the N-terminus, the 205-residue chain is Ephrin-A1 (205 aa).

An N-terminal signal peptide occupies residues 1 to 17 (MEFLWAPLLGLCCSLAA). Positions 18-161 (ADRHIVFWNS…THNPQAHVNP (144 aa)) constitute an Ephrin RBD domain. N-linked (GlcNAc...) asparagine glycosylation occurs at asparagine 26. Intrachain disulfides connect cysteine 51–cysteine 92 and cysteine 80–cysteine 140. Residue serine 182 is the site of GPI-anchor amidated serine attachment. A propeptide spans 183–205 (AAPRLFPLVWAVLLLPLLLLQSQ) (removed in mature form).

This sequence belongs to the ephrin family. Monomer. Homodimer. Forms heterodimers with EPHA2. Binds to the receptor tyrosine kinases EPHA2, EPHA3, EPHA4, EPHA5, EPHA6 and EPHA7. Also binds with low affinity to EPHA1. In terms of processing, undergoes proteolysis by a metalloprotease to give rise to a soluble monomeric form. N-Glycosylation is required for binding to EPHA2 receptor and inducing its internalization. Expressed in myogenic progenitor cells.

The protein localises to the cell membrane. Its subcellular location is the secreted. Cell surface GPI-bound ligand for Eph receptors, a family of receptor tyrosine kinases which are crucial for migration, repulsion and adhesion during neuronal, vascular and epithelial development. Binds promiscuously Eph receptors residing on adjacent cells, leading to contact-dependent bidirectional signaling into neighboring cells. Plays an important role in angiogenesis and tumor neovascularization. The recruitment of VAV2, VAV3 and PI3-kinase p85 subunit by phosphorylated EPHA2 is critical for EFNA1-induced RAC1 GTPase activation and vascular endothelial cell migration and assembly. Exerts anti-oncogenic effects in tumor cells through activation and down-regulation of EPHA2. Activates EPHA2 by inducing tyrosine phosphorylation which leads to its internalization and degradation. Acts as a negative regulator in the tumorigenesis of gliomas by down-regulating EPHA2 and FAK. Can evoke collapse of embryonic neuronal growth cone and regulates dendritic spine morphogenesis. The sequence is that of Ephrin-A1 (Efna1) from Mus musculus (Mouse).